A 605-amino-acid polypeptide reads, in one-letter code: Acetoin dehydrogenase operon transcriptional activator AcoR (605 aa).

The Sigma-54 factor interaction domain occupies 295-520; the sequence is VIGQSGRSQA…LFNVFERLSI (226 aa). ATP-binding positions include 323-330 and 387-396; these read GETGTGKE and ANQGTLFLDE. A DNA-binding region (H-T-H motif) is located at residues 578 to 597; the sequence is VSQAAKISGIPRSTFYKRLK.

Functionally, acts as a transcriptional activator of the acoABCL operon encoding the acetoin dehydrogenase complex. The protein is Acetoin dehydrogenase operon transcriptional activator AcoR (acoR) of Bacillus subtilis (strain 168).